A 539-amino-acid polypeptide reads, in one-letter code: Phosphoenolpyruvate carboxykinase (ATP) (539 aa).

Residues Arg64, Tyr206, and Lys212 each contribute to the substrate site. ATP-binding positions include Lys212, His231, and 247–255 (GLSGTGKTT). Residues Lys212 and His231 each contribute to the Mn(2+) site. Residue Asp268 coordinates Mn(2+). Residues Glu296, Arg332, 448–449 (RI), and Thr454 each bind ATP. Arg332 provides a ligand contact to substrate.

It belongs to the phosphoenolpyruvate carboxykinase (ATP) family. Monomer. Mn(2+) serves as cofactor.

The protein resides in the cytoplasm. It carries out the reaction oxaloacetate + ATP = phosphoenolpyruvate + ADP + CO2. It functions in the pathway carbohydrate biosynthesis; gluconeogenesis. In terms of biological role, involved in the gluconeogenesis. Catalyzes the conversion of oxaloacetate (OAA) to phosphoenolpyruvate (PEP) through direct phosphoryl transfer between the nucleoside triphosphate and OAA. The protein is Phosphoenolpyruvate carboxykinase (ATP) of Citrobacter koseri (strain ATCC BAA-895 / CDC 4225-83 / SGSC4696).